Here is a 214-residue protein sequence, read N- to C-terminus: ATP synthase subunit 5, mitochondrial (214 aa).

Residues 1 to 24 (MFASRAIRMMSMRPMARTMATKAA) constitute a mitochondrion transit peptide.

In terms of assembly, F-type ATP synthases have 2 components, the catalytic core F(1) and the membrane-embedded component F(0), linked together by a central stalk and a peripheral stalk. The central stalk, also called rotor shaft, is often seen as part of F(1). The peripheral stalk is seen as part of F(0). F(0) contains the membrane channel next to the rotor. F-type ATP synthases form dimers but each monomer functions independently in ATP generation. The dimer consists of 17 different polypeptides: ATP1 (subunit alpha, 3 molecules per monomer, part of F(1)), ATP2 (subunit beta, 3 copies per monomer, part of F(1)), ATP3 (subunit gamma, part of the central stalk), ATP4 (subunit b, part of the peripheral stalk), ATP5/OSCP (subunit 5/OSCP, part of the peripheral stalk), ATP6 (subunit a, part of the peripheral stalk), ATP7 (subunit d, part of the peripheral stalk), ATP8 (subunit 8, part of the peripheral stalk), OLI1 (subunit c, part of the rotor, 10 molecules per monomer), ATP14 (subunit h, part of the peripheral stalk), ATP15 (subunit epsilon, part of the central stalk), ATP16 (subunit delta, part of the central stalk), ATP17 (subunit f, part of the peripheral stalk), ATP18 (subunit i/j, part of the peripheral stalk), ATP19 (subunit k, dimer-specific, at interface between monomers), ATP20 (subunit g, at interface between monomers), TIM11 (subunit e, at interface between monomers).

The protein resides in the mitochondrion inner membrane. Its function is as follows. Mitochondrial membrane ATP synthase (F(1)F(0) ATP synthase or Complex V) produces ATP from ADP in the presence of a proton gradient across the membrane which is generated by electron transport complexes of the respiratory chain. F-type ATP synthases consist of two structural domains, F(1) - containing the extramembraneous catalytic core, and F(0) - containing the membrane proton channel, linked together by a central stalk and a peripheral stalk. During catalysis, ATP synthesis in the catalytic domain of F(1) is coupled via a rotary mechanism of the central stalk subunits to proton translocation. Part of the complex F(0) domain and the peripheral stalk, which acts as a stator to hold the catalytic alpha/ATP1(3)beta/ATP2(3) subcomplex and subunit a/ATP6 static relative to the rotary elements. The chain is ATP synthase subunit 5, mitochondrial from Yarrowia lipolytica (strain CLIB 122 / E 150) (Yeast).